Here is a 196-residue protein sequence, read N- to C-terminus: MTPEEVLEEFRSAGALLQGHFILSSGLRSPTFLQKMTIFSDPARTERLCRALAEVITARFGRIDIVVSPAIGGIIPGYETARHLGAKAIFVERDPGGPFTLRRGFSIPAGTRAVIVEDIVTTGLSARECLASLKDEAGEVVGAACLIDRSGGRGAIGLPLLSLVTLDIPTYAPDALPAELAAIPPVKPGSRALPKP.

5-phospho-alpha-D-ribose 1-diphosphate is bound at residue 117–125; it reads EDIVTTGLS. Residues Thr-121 and Arg-149 each coordinate orotate.

Belongs to the purine/pyrimidine phosphoribosyltransferase family. PyrE subfamily. As to quaternary structure, homodimer. The cofactor is Mg(2+).

The enzyme catalyses orotidine 5'-phosphate + diphosphate = orotate + 5-phospho-alpha-D-ribose 1-diphosphate. It participates in pyrimidine metabolism; UMP biosynthesis via de novo pathway; UMP from orotate: step 1/2. Functionally, catalyzes the transfer of a ribosyl phosphate group from 5-phosphoribose 1-diphosphate to orotate, leading to the formation of orotidine monophosphate (OMP). The chain is Orotate phosphoribosyltransferase from Methylorubrum extorquens (strain PA1) (Methylobacterium extorquens).